The chain runs to 249 residues: Adapter protein MecA (249 aa).

The protein belongs to the MecA family. As to quaternary structure, homodimer.

Enables the recognition and targeting of unfolded and aggregated proteins to the ClpC protease or to other proteins involved in proteolysis. This Streptococcus thermophilus (strain ATCC BAA-491 / LMD-9) protein is Adapter protein MecA.